Reading from the N-terminus, the 197-residue chain is UDP-N-acetylglucosamine transferase subunit alg13 (197 aa).

Positions 174-197 (VRGPDQKNQPTLEQVMSDEMGFVD) are disordered.

This sequence belongs to the glycosyltransferase 28 family. Heterodimer with alg14 to form a functional enzyme.

It localises to the endoplasmic reticulum. It carries out the reaction an N-acetyl-alpha-D-glucosaminyl-diphospho-di-trans,poly-cis-dolichol + UDP-N-acetyl-alpha-D-glucosamine = an N,N'-diacetylchitobiosyl-diphospho-di-trans,poly-cis-dolichol + UDP + H(+). Involved in protein N-glycosylation. Essential for the second step of the dolichol-linked oligosaccharide pathway. The chain is UDP-N-acetylglucosamine transferase subunit alg13 (alg13) from Aspergillus fumigatus (strain ATCC MYA-4609 / CBS 101355 / FGSC A1100 / Af293) (Neosartorya fumigata).